The primary structure comprises 178 residues: Photosystem I assembly protein Ycf4 (178 aa).

A run of 2 helical transmembrane segments spans residues 19-39 (ILVAAMVTIGGVGFLFASLSS) and 61-81 (LVMGLYSIAAALLATYLWAVI).

This sequence belongs to the Ycf4 family.

The protein localises to the cellular thylakoid membrane. Seems to be required for the assembly of the photosystem I complex. This Synechococcus sp. (strain WH7803) protein is Photosystem I assembly protein Ycf4.